The following is a 167-amino-acid chain: Small ribosomal subunit protein uS5 (167 aa).

One can recognise an S5 DRBM domain in the interval Leu12–Val75.

Belongs to the universal ribosomal protein uS5 family. As to quaternary structure, part of the 30S ribosomal subunit. Contacts proteins S4 and S8.

Functionally, with S4 and S12 plays an important role in translational accuracy. Located at the back of the 30S subunit body where it stabilizes the conformation of the head with respect to the body. This Listeria monocytogenes serotype 4b (strain F2365) protein is Small ribosomal subunit protein uS5.